We begin with the raw amino-acid sequence, 149 residues long: Probable calcium-binding protein CML25/26 (149 aa).

4 EF-hand domains span residues 1–35 (MASSASSVFAAFDKDGDGKVSASELRGCMAAALGE), 37–72 (VSEEEAAAILATADTDGDGLLDHHEFMRLSAAHQLQ), 77–113 (ESLRCLREAFDMYAEEEETAVITPASLRRMLRRLGSE), and 117–149 (LEMEECRAMICRFDLNGDGVLSFDEFRVMMLMA). Residues D13, D15, D17, K19, E24, D50, D52, D54, and E61 each coordinate Ca(2+). Ca(2+)-binding residues include D130, N132, D134, and E141.

In terms of biological role, potential calcium sensor. This chain is Probable calcium-binding protein CML25/26 (CML25), found in Oryza sativa subsp. japonica (Rice).